The following is a 239-amino-acid chain: ATP-dependent dethiobiotin synthetase BioD (239 aa).

Position 15–20 (15–20 (EIGKTF)) interacts with ATP. A Mg(2+)-binding site is contributed by threonine 19. Lysine 40 is an active-site residue. Residues aspartate 57, 118–121 (EGVG), and 178–179 (NH) each bind ATP. Mg(2+) contacts are provided by aspartate 57 and glutamate 118.

It belongs to the dethiobiotin synthetase family. In terms of assembly, homodimer. Mg(2+) serves as cofactor.

It localises to the cytoplasm. The enzyme catalyses (7R,8S)-7,8-diammoniononanoate + CO2 + ATP = (4R,5S)-dethiobiotin + ADP + phosphate + 3 H(+). The protein operates within cofactor biosynthesis; biotin biosynthesis; biotin from 7,8-diaminononanoate: step 1/2. Its function is as follows. Catalyzes a mechanistically unusual reaction, the ATP-dependent insertion of CO2 between the N7 and N8 nitrogen atoms of 7,8-diaminopelargonic acid (DAPA, also called 7,8-diammoniononanoate) to form a ureido ring. The polypeptide is ATP-dependent dethiobiotin synthetase BioD (Burkholderia multivorans (strain ATCC 17616 / 249)).